The primary structure comprises 435 residues: F-box/FBD/LRR-repeat protein At1g51370 (435 aa).

The F-box domain occupies Glu18–Asp64. 5 LRR repeats span residues Val123–Trp148, Val170–Ser195, Ala234–Asn259, Gly262–Ser287, and Arg314–Met340. In terms of domain architecture, FBD spans Glu354 to Val406.

The sequence is that of F-box/FBD/LRR-repeat protein At1g51370 from Arabidopsis thaliana (Mouse-ear cress).